Reading from the N-terminus, the 181-residue chain is Peptide deformylase (181 aa).

The Fe cation site is built by Cys103 and His145. Glu146 is a catalytic residue. Residue His149 coordinates Fe cation.

This sequence belongs to the polypeptide deformylase family. Requires Fe(2+) as cofactor.

It catalyses the reaction N-terminal N-formyl-L-methionyl-[peptide] + H2O = N-terminal L-methionyl-[peptide] + formate. In terms of biological role, removes the formyl group from the N-terminal Met of newly synthesized proteins. Requires at least a dipeptide for an efficient rate of reaction. N-terminal L-methionine is a prerequisite for activity but the enzyme has broad specificity at other positions. The polypeptide is Peptide deformylase (Orientia tsutsugamushi (strain Ikeda) (Rickettsia tsutsugamushi)).